Here is a 257-residue protein sequence, read N- to C-terminus: Ribosomal RNA small subunit methyltransferase J (257 aa).

S-adenosyl-L-methionine contacts are provided by residues 107–108, 123–124, and D177; these read RD and ER.

Belongs to the methyltransferase superfamily. RsmJ family.

Its subcellular location is the cytoplasm. The enzyme catalyses guanosine(1516) in 16S rRNA + S-adenosyl-L-methionine = N(2)-methylguanosine(1516) in 16S rRNA + S-adenosyl-L-homocysteine + H(+). Specifically methylates the guanosine in position 1516 of 16S rRNA. The chain is Ribosomal RNA small subunit methyltransferase J from Haemophilus influenzae (strain PittGG).